Reading from the N-terminus, the 323-residue chain is L-lactate dehydrogenase 1 (323 aa).

NAD(+)-binding positions include valine 17, aspartate 38, arginine 43, tyrosine 68, and 82-83; that span reads GA. Substrate is bound by residues glutamine 85 and arginine 91. NAD(+) is bound by residues serine 104, 121 to 123, and serine 146; that span reads AAN. 123–126 lines the substrate pocket; that stretch reads NPVD. 151–154 contacts substrate; sequence DTGR. Residue histidine 178 is the Proton acceptor of the active site. Tyrosine 223 carries the phosphotyrosine modification. Residue threonine 232 participates in substrate binding.

The protein belongs to the LDH/MDH superfamily. LDH family. In terms of assembly, homotetramer.

The protein localises to the cytoplasm. It catalyses the reaction (S)-lactate + NAD(+) = pyruvate + NADH + H(+). The protein operates within fermentation; pyruvate fermentation to lactate; (S)-lactate from pyruvate: step 1/1. Catalyzes the conversion of lactate to pyruvate. This chain is L-lactate dehydrogenase 1, found in Lactobacillus johnsonii (strain CNCM I-12250 / La1 / NCC 533).